The chain runs to 311 residues: CAAX prenyl protease 2 (311 aa).

3 helical membrane-spanning segments follow: residues 14 to 34, 51 to 71, and 94 to 114; these read VATC…PTVI, FICA…ILPI, and VVYP…LKLF. The Proton donor/acceptor role is filled by E164. Residues 173–193 form a helical membrane-spanning segment; the sequence is IPLLLCAGFRINTAIFLCPVL. The active-site Proton donor/acceptor is the H198. 3 consecutive transmembrane segments (helical) span residues 219–239, 244–264, and 268–288; these read IVGL…FLFI, LAAP…VLYA, and GLVS…LFPL.

The protein belongs to the peptidase U48 family. In terms of tissue distribution, expressed in seeds, stems, leaves, flowers and siliques.

The protein localises to the endoplasmic reticulum membrane. The catalysed reaction is Hydrolyzes the peptide bond -P2-(S-farnesyl or geranylgeranyl)C-P1'-P2'-P3'-COOH where P1' and P2' are amino acids with aliphatic sidechains and P3' is any C-terminal residue.. Inhibited in vitro by L-1-tosylamido-2-phenylethyl chloromethyl ketone (TPCK) and N-ethylmaleimide, but not by EDTA. Its function is as follows. Protease involved in the processing of a variety of prenylated proteins containing the C-terminal CAAX motif, where C is a cysteine modified with an isoprenoid lipid, A is an aliphatic amino acid and X is any C-terminal amino acid. Proteolytically removes the C-terminal three residues of farnesylated and geranylated proteins, leaving the prenylated cysteine as the new C-terminus. The substrate specificity is only partially overlapping with that of FACE1. CAAX processing is likely required for subcellular targeting of prenylated proteins to the plasma membrane. In Arabidopsis thaliana (Mouse-ear cress), this protein is CAAX prenyl protease 2 (FACE2).